A 178-amino-acid polypeptide reads, in one-letter code: MAAKLILFVCAIALVAQSVLGTGCGCCCRGCGCGCGGCGSRCCDRFCLCSNSAAPTGLSICSENRYNGDVCVCGEVPFLGTADVCGDMCSSGCGCIDYGCGDGCVGITQSCGGCGCGCGGCGGCGCGGCGGCGCGGCGGCGCCGGCGGCGCGCGGCGGCGCCGGCGGCGCGCGGCGCC.

The first 21 residues, 1 to 21 (MAAKLILFVCAIALVAQSVLG), serve as a signal peptide directing secretion. Residues 22-46 (TGCGCCCRGCGCGCGGCGSRCCDRF) are left arm. A central domain region spans residues 47–110 (CLCSNSAAPT…GDGCVGITQS (64 aa)). The interval 111 to 178 (CGGCGCGCGG…GCGCGGCGCC (68 aa)) is right arm (Gly-rich tandem repeats).

It belongs to the chorion protein family.

Functionally, this protein is one of many from the eggshell of the silk moth. This Bombyx mori (Silk moth) protein is Chorion class high-cysteine HCB protein 13.